Reading from the N-terminus, the 72-residue chain is Large ribosomal subunit protein bL32c (72 aa).

Residues 49 to 72 are disordered; it reads PPAPVSENWDDEAKGFGKDLDAAE. Residues 59 to 72 show a composition bias toward basic and acidic residues; sequence DEAKGFGKDLDAAE.

Belongs to the bacterial ribosomal protein bL32 family.

The protein localises to the plastid. The protein resides in the chloroplast. In Ostreococcus tauri, this protein is Large ribosomal subunit protein bL32c.